A 164-amino-acid chain; its full sequence is Cold-inducible RNA-binding protein (164 aa).

Residues 6–84 enclose the RRM domain; sequence GKLFVGGLSF…RQIRVDQAGK (79 aa). A disordered region spans residues 65–164; it reads AGMNGKTVDG…SYRDSYDSYG (100 aa). Residues 93–118 show a composition bias toward gly residues; that stretch reads YRGGSSGGGRGFFRGGRGRGGGGYGG. Residues 155–164 are compositionally biased toward basic and acidic residues; it reads SYRDSYDSYG.

As to quaternary structure, interacts with prmt1. Interacts with elavl1/elrA (via RRM3). Associates with ribosomes. In terms of processing, methylated on arginine residues within RGG motifs. Methylation by prmt1 promotes cytoplasmic accumulation.

The protein localises to the nucleus. The protein resides in the nucleoplasm. Its subcellular location is the cytoplasm. Cold-inducible mRNA binding protein. Acts cooperatively with elavl1/elrA to stabilize AU-rich element (ARE)-containing mRNAs by binding to them and inhibiting their deadenylation. Essential for embryonic gastrulation and neural development, acting to maintain the expression of a set of adhesion molecules, and cell movement during embryogenesis. Required for pronephros development. May play a role in hibernation. The sequence is that of Cold-inducible RNA-binding protein from Aquarana catesbeiana (American bullfrog).